The sequence spans 312 residues: Apolipoprotein E (312 aa).

An N-terminal signal peptide occupies residues 1 to 18; it reads MKALWALLLVPLLTGCLA. 8 tandem repeats follow at residues 72-93, 94-115, 116-137, 138-159, 160-181, 182-203, 204-225, and 226-247. Residues 72-247 are 8 X 22 AA approximate tandem repeats; it reads VLMEDTMTEV…RLEEVRDQME (176 aa). At methionine 135 the chain carries Methionine sulfoxide. The residue at position 139 (serine 139) is a Phosphoserine. Residues 150 to 160 are LDL and other lipoprotein receptors binding; the sequence is HLRKMRKRLMR. The LDL receptor binding stretch occupies residues 150 to 160; sequence HLRKMRKRLMR. A heparin-binding site is contributed by 154-157; the sequence is MRKR. The lipid-binding and lipoprotein association stretch occupies residues 202-282; it reads TANLGSGAAQ…GWFEPLVEDM (81 aa). 221 to 228 contributes to the heparin binding site; that stretch reads SDRIRGRL. Residues 258–312 form a homooligomerization region; it reads QQIRLQAEVFQARLKGWFEPLVEDMQRQWANLMEKIQASVATNSIASTTVPLENQ. Positions 270 to 282 are specificity for association with VLDL; that stretch reads RLKGWFEPLVEDM.

Belongs to the apolipoprotein A1/A4/E family. Homotetramer. May interact with ABCA1; functionally associated with ABCA1 in the biogenesis of HDLs. May interact with APP/A4 amyloid-beta peptide; the interaction is extremely stable in vitro but its physiological significance is unclear. May interact with MAPT. May interact with MAP2. In the cerebrospinal fluid, interacts with secreted SORL1. Interacts with PMEL; this allows the loading of PMEL luminal fragment on ILVs to induce fibril nucleation. Post-translationally, APOE exists as multiple glycosylated and sialylated glycoforms within cells and in plasma. The extent of glycosylation and sialylation are tissue and context specific. Glycated in plasma VLDL. In terms of processing, phosphorylated by FAM20C in the extracellular medium.

The protein localises to the secreted. It localises to the extracellular space. The protein resides in the extracellular matrix. Its subcellular location is the extracellular vesicle. It is found in the endosome. The protein localises to the multivesicular body. Its function is as follows. APOE is an apolipoprotein, a protein associating with lipid particles, that mainly functions in lipoprotein-mediated lipid transport between organs via the plasma and interstitial fluids. APOE is a core component of plasma lipoproteins and is involved in their production, conversion and clearance. Apolipoproteins are amphipathic molecules that interact both with lipids of the lipoprotein particle core and the aqueous environment of the plasma. As such, APOE associates with chylomicrons, chylomicron remnants, very low density lipoproteins (VLDL) and intermediate density lipoproteins (IDL) but shows a preferential binding to high-density lipoproteins (HDL). It also binds a wide range of cellular receptors including the LDL receptor/LDLR, the LDL receptor-related proteins LRP1, LRP2 and LRP8 and the very low-density lipoprotein receptor/VLDLR that mediate the cellular uptake of the APOE-containing lipoprotein particles. Finally, APOE also has a heparin-binding activity and binds heparan-sulfate proteoglycans on the surface of cells, a property that supports the capture and the receptor-mediated uptake of APOE-containing lipoproteins by cells. A main function of APOE is to mediate lipoprotein clearance through the uptake of chylomicrons, VLDLs, and HDLs by hepatocytes. APOE is also involved in the biosynthesis by the liver of VLDLs as well as their uptake by peripheral tissues ensuring the delivery of triglycerides and energy storage in muscle, heart and adipose tissues. By participating in the lipoprotein-mediated distribution of lipids among tissues, APOE plays a critical role in plasma and tissues lipid homeostasis. APOE is also involved in two steps of reverse cholesterol transport, the HDLs-mediated transport of cholesterol from peripheral tissues to the liver, and thereby plays an important role in cholesterol homeostasis. First, it is functionally associated with ABCA1 in the biogenesis of HDLs in tissues. Second, it is enriched in circulating HDLs and mediates their uptake by hepatocytes. APOE also plays an important role in lipid transport in the central nervous system, regulating neuron survival and sprouting. This Rattus rattus (Black rat) protein is Apolipoprotein E (Apoe).